The sequence spans 149 residues: Placenta growth factor (149 aa).

The N-terminal stretch at 1 to 18 (MPTVRLFTCFLQLLTGLV) is a signal peptide. An N-linked (GlcNAc...) asparagine glycan is attached at N33. 3 disulfides stabilise this stretch: C52–C94, C83–C128, and C87–C130. N101 carries N-linked (GlcNAc...) asparagine glycosylation.

It belongs to the PDGF/VEGF growth factor family. As to quaternary structure, antiparallel homodimer; disulfide-linked. Also found as heterodimer with VEGFA/VEGF.

It localises to the secreted. Growth factor active in angiogenesis and endothelial cell growth, stimulating their proliferation and migration. It binds to the receptor FLT1/VEGFR-1. Also promotes cell tumor growth. This Bos taurus (Bovine) protein is Placenta growth factor (PGF).